Consider the following 447-residue polypeptide: Phosphoglucosamine mutase (447 aa).

Ser-101 serves as the catalytic Phosphoserine intermediate. Mg(2+) contacts are provided by Ser-101, Asp-242, Asp-244, and Asp-246. Position 101 is a phosphoserine (Ser-101).

This sequence belongs to the phosphohexose mutase family. It depends on Mg(2+) as a cofactor. Activated by phosphorylation.

It catalyses the reaction alpha-D-glucosamine 1-phosphate = D-glucosamine 6-phosphate. Functionally, catalyzes the conversion of glucosamine-6-phosphate to glucosamine-1-phosphate. The protein is Phosphoglucosamine mutase of Bradyrhizobium diazoefficiens (strain JCM 10833 / BCRC 13528 / IAM 13628 / NBRC 14792 / USDA 110).